The following is a 418-amino-acid chain: Tyrosine--tRNA ligase (418 aa).

An L-tyrosine-binding site is contributed by Y34. A 'HIGH' region motif is present at residues 39–48 (PTADSLHLGH). The L-tyrosine site is built by Y169 and Q173. The 'KMSKS' region motif lies at 229-233 (KFGKS). K232 serves as a coordination point for ATP. The S4 RNA-binding domain maps to 352 to 418 (LNLVDMLVTA…GKKKYAVLTY (67 aa)).

The protein belongs to the class-I aminoacyl-tRNA synthetase family. TyrS type 1 subfamily. As to quaternary structure, homodimer.

The protein localises to the cytoplasm. The enzyme catalyses tRNA(Tyr) + L-tyrosine + ATP = L-tyrosyl-tRNA(Tyr) + AMP + diphosphate + H(+). Functionally, catalyzes the attachment of tyrosine to tRNA(Tyr) in a two-step reaction: tyrosine is first activated by ATP to form Tyr-AMP and then transferred to the acceptor end of tRNA(Tyr). This Streptococcus pyogenes serotype M18 (strain MGAS8232) protein is Tyrosine--tRNA ligase.